Consider the following 418-residue polypeptide: D-amino acid dehydrogenase (418 aa).

Position 3 to 17 (3 to 17 (VLVLGAGVAGVSSAW)) interacts with FAD.

This sequence belongs to the DadA oxidoreductase family. The cofactor is FAD.

It catalyses the reaction a D-alpha-amino acid + A + H2O = a 2-oxocarboxylate + AH2 + NH4(+). It functions in the pathway amino-acid degradation; D-alanine degradation; NH(3) and pyruvate from D-alanine: step 1/1. In terms of biological role, oxidative deamination of D-amino acids. This is D-amino acid dehydrogenase from Neisseria meningitidis serogroup C / serotype 2a (strain ATCC 700532 / DSM 15464 / FAM18).